We begin with the raw amino-acid sequence, 551 residues long: uncharacterized protein (551 aa).

6 helical membrane passes run 1-21 (MIAY…IVNS), 25-45 (WTYF…LMVS), 99-119 (GALF…FGFN), 124-144 (LGVL…SLMW), 266-286 (FAFL…GVFY), and 490-510 (FLDL…SAED).

It is found in the cell membrane. This is an uncharacterized protein from Haemophilus influenzae (strain ATCC 51907 / DSM 11121 / KW20 / Rd).